A 441-amino-acid polypeptide reads, in one-letter code: MDIRWEEILEEISKQIPPKYFSNFIAPLRFDKWENQVVHLMAPSGGIKRHVETKYIGFIEDAVYQVVGDRFKVSILTESETSSHVLKEVIQSKFDDSDSDLNPEYIFSNYITSDSNRIAFTAAKSVVEQPGKYNPLYLFGPVGVGKTHLLHSIGNEIKKKDPWKTVRYVNSTSFLNEFIFTVRQNNRESLESFKIRYQSYNVLLFDDIQFLNGGAEKTQEEFFALFNFLYDRKRQIVIASDRPSYELPLHDRLKSRFVHGLQADIKSHDLELRKSLLKSNFSEFNIPASDNLLHWLAERLEGDSRALIGIVNDLVMYKKAYEYFLLTEDKIKEIAEARFLTNKKRIGFSPDMVIDLVCERTNVARKDLLGKSRKADFIPPRHLCMLLLHDVLNVPKAQIGRIFSTTHSTVIHGIDKFKERMKSEAQWEDLFHTIKHKISFQ.

A domain I, interacts with DnaA modulators region spans residues 1-71; sequence MDIRWEEILE…AVYQVVGDRF (71 aa). The segment at 71-99 is domain II; sequence FKVSILTESETSSHVLKEVIQSKFDDSDS. The tract at residues 100-318 is domain III, AAA+ region; the sequence is DLNPEYIFSN…GIVNDLVMYK (219 aa). ATP contacts are provided by Gly143, Gly145, Lys146, and Thr147. The segment at 319–441 is domain IV, binds dsDNA; it reads KAYEYFLLTE…HTIKHKISFQ (123 aa).

It belongs to the DnaA family. Oligomerizes as a right-handed, spiral filament on DNA at oriC.

It localises to the cytoplasm. Its function is as follows. Plays an essential role in the initiation and regulation of chromosomal replication. ATP-DnaA binds to the origin of replication (oriC) to initiate formation of the DNA replication initiation complex once per cell cycle. Binds the DnaA box (a 9 base pair repeat at the origin) and separates the double-stranded (ds)DNA. Forms a right-handed helical filament on oriC DNA; dsDNA binds to the exterior of the filament while single-stranded (ss)DNA is stabiized in the filament's interior. The ATP-DnaA-oriC complex binds and stabilizes one strand of the AT-rich DNA unwinding element (DUE), permitting loading of DNA polymerase. After initiation quickly degrades to an ADP-DnaA complex that is not apt for DNA replication. Binds acidic phospholipids. The sequence is that of Chromosomal replication initiator protein DnaA from Leptospira biflexa serovar Patoc (strain Patoc 1 / Ames).